A 451-amino-acid polypeptide reads, in one-letter code: MSYSVLEALRNSPDVVRKVLTARRMDASLVDKFLELDEKWRRLKKEVDELRHEYNKLSKEGAKAPPERRREIADKARELAARLERAEKELEETERAREEVLWSFPNLIHESVPICPEGVDSIPVRHWGVVKTTKDVVDKLDKGVDYLVVEKAPVGHADMAEVVLKMADTLKAGEVAGSRFYYLFDDLVWLDFALAMYALDYLAQKGFRPVIPPYMLKYDLIRRVLDFDTFKDAIYKIDGEDLYLIATAEHGIAAYLYKRELLEEELPQLYVGWSPCFRKEAGAGSRDIKGIFRVHIFHKVEQFVFSLPEDSWKWHEEITKNTEELIRGLGLPYRVVNICAHDLGAPAAKKYDIEVWYPSQGMYRELASCSNVTDWQSYRLGIRVTRKGMKREYVHTLNCTGLATTRTITAILENFQREDGAVEIPKVLRQYLEPIKAAPKDYILPKAAKSP.

247 to 249 (TAE) is an L-serine binding site. ATP contacts are provided by residues 278–280 (RKE) and V294. E301 contacts L-serine. Position 365-368 (365-368 (ELAS)) interacts with ATP. Position 400 (T400) interacts with L-serine.

Belongs to the class-II aminoacyl-tRNA synthetase family. Type-1 seryl-tRNA synthetase subfamily. In terms of assembly, homodimer. The tRNA molecule binds across the dimer.

The protein resides in the cytoplasm. The catalysed reaction is tRNA(Ser) + L-serine + ATP = L-seryl-tRNA(Ser) + AMP + diphosphate + H(+). It carries out the reaction tRNA(Sec) + L-serine + ATP = L-seryl-tRNA(Sec) + AMP + diphosphate + H(+). It functions in the pathway aminoacyl-tRNA biosynthesis; selenocysteinyl-tRNA(Sec) biosynthesis; L-seryl-tRNA(Sec) from L-serine and tRNA(Sec): step 1/1. Its function is as follows. Catalyzes the attachment of serine to tRNA(Ser). Is also able to aminoacylate tRNA(Sec) with serine, to form the misacylated tRNA L-seryl-tRNA(Sec), which will be further converted into selenocysteinyl-tRNA(Sec). This chain is Serine--tRNA ligase, found in Pyrobaculum aerophilum (strain ATCC 51768 / DSM 7523 / JCM 9630 / CIP 104966 / NBRC 100827 / IM2).